Here is a 159-residue protein sequence, read N- to C-terminus: Protein E6 (159 aa).

Zinc fingers lie at residues 35-71 (CVYC…CGKC) and 108-144 (CYIC…CMQC).

This sequence belongs to the papillomaviridae E6 protein family. Forms homodimers. Interacts with ubiquitin-protein ligase UBE3A/E6-AP; this interaction stimulates UBE3A ubiquitin activity. Interacts with host TP53 and EP300; this interaction inhibits TP53 activity.

The protein localises to the host cytoplasm. The protein resides in the host nucleus. Functionally, plays a major role in the induction and maintenance of cellular transformation. E6 associates with host UBE3A/E6-AP ubiquitin-protein ligase and modulates its activity. Sequesters tumor suppressor TP53 in the host cytoplasm and modulates its activity by interacting with host EP300 that results in the reduction of TP53 acetylation and activation. In turn, apoptosis induced by DNA damage is inhibited. E6 also protects host keratinocytes from apoptosis by mediating the degradation of host BAK1. May also inhibit host immune response. The protein is Protein E6 of Homo sapiens (Human).